The primary structure comprises 434 residues: 3-phosphoshikimate 1-carboxyvinyltransferase (434 aa).

3 residues coordinate 3-phosphoshikimate: Lys22, Ser23, and Arg27. Position 22 (Lys22) interacts with phosphoenolpyruvate. Phosphoenolpyruvate-binding residues include Gly93 and Arg121. Positions 168, 169, 170, 199, 320, and 347 each coordinate 3-phosphoshikimate. Residue Gln170 coordinates phosphoenolpyruvate. The active-site Proton acceptor is Asp320. 3 residues coordinate phosphoenolpyruvate: Arg351, Arg394, and Lys419.

This sequence belongs to the EPSP synthase family. As to quaternary structure, monomer.

The protein resides in the cytoplasm. It carries out the reaction 3-phosphoshikimate + phosphoenolpyruvate = 5-O-(1-carboxyvinyl)-3-phosphoshikimate + phosphate. It participates in metabolic intermediate biosynthesis; chorismate biosynthesis; chorismate from D-erythrose 4-phosphate and phosphoenolpyruvate: step 6/7. Its function is as follows. Catalyzes the transfer of the enolpyruvyl moiety of phosphoenolpyruvate (PEP) to the 5-hydroxyl of shikimate-3-phosphate (S3P) to produce enolpyruvyl shikimate-3-phosphate and inorganic phosphate. This chain is 3-phosphoshikimate 1-carboxyvinyltransferase, found in Burkholderia vietnamiensis (strain G4 / LMG 22486) (Burkholderia cepacia (strain R1808)).